The following is a 551-amino-acid chain: HTH-type transcriptional regulator SgrR (551 aa).

The HTH marR-type domain maps to 1–116 (MPSARLQQQF…LVSHLGRSFR (116 aa)). Residues 26–49 (LNELAALLSCSRRHMRTLLNTMQD) constitute a DNA-binding region (H-T-H motif). The tract at residues 163–492 (ELEADIAHHW…IDWQADAARW (330 aa)) is solute-binding.

Its function is as follows. Activates the small RNA gene sgrS under glucose-phosphate stress conditions as well as yfdZ. Represses its own transcription under both stress and non-stress conditions. Might act as a sensor of the intracellular accumulation of phosphoglucose by binding these molecules in its C-terminal solute-binding domain. The protein is HTH-type transcriptional regulator SgrR of Escherichia coli O1:K1 / APEC.